The sequence spans 600 residues: DNA polymerase alpha subunit B (600 aa).

A disordered region spans residues 112 to 167 (AYTTPSKGPHKRVSSTPETPLTKRSISTRSPHQLLSPSSFSPSATPSQKYSSRTNR). Residues 125 to 140 (SSTPETPLTKRSISTR) are compositionally biased toward polar residues. Serine 126 is subject to Phosphoserine. A phosphothreonine mark is found at threonine 127 and threonine 130. A phosphoserine mark is found at serine 141, serine 147, serine 152, and serine 154. The span at 141 to 158 (SPHQLLSPSSFSPSATPS) shows a compositional bias: low complexity.

The protein belongs to the DNA polymerase alpha subunit B family. Component of the alpha DNA polymerase complex (also known as the alpha DNA polymerase-primase complex) consisting of four subunits: the catalytic subunit POLA1, the regulatory subunit POLA2, and the primase complex subunits PRIM1 and PRIM2 respectively. Within the complex, POLA1 directly interacts with PRIM2. In terms of processing, phosphorylated in a cell cycle-dependent manner, in G2/M phase.

It is found in the nucleus. In terms of biological role, accessory subunit of the DNA polymerase alpha complex (also known as the alpha DNA polymerase-primase complex) which plays an essential role in the initiation of DNA synthesis. During the S phase of the cell cycle, the DNA polymerase alpha complex (composed of a catalytic subunit POLA1, an accessory subunit POLA2 and two primase subunits, the catalytic subunit PRIM1 and the regulatory subunit PRIM2) is recruited to DNA at the replicative forks via direct interactions with MCM10 and WDHD1. The primase subunit of the polymerase alpha complex initiates DNA synthesis by oligomerising short RNA primers on both leading and lagging strands. These primers are initially extended by the polymerase alpha catalytic subunit and subsequently transferred to polymerase delta and polymerase epsilon for processive synthesis on the lagging and leading strand, respectively. The protein is DNA polymerase alpha subunit B (Pola2) of Rattus norvegicus (Rat).